The chain runs to 127 residues: Large ribosomal subunit protein bL21 (127 aa).

Belongs to the bacterial ribosomal protein bL21 family. As to quaternary structure, part of the 50S ribosomal subunit. Contacts protein L20.

Its function is as follows. This protein binds to 23S rRNA in the presence of protein L20. The protein is Large ribosomal subunit protein bL21 of Synechococcus sp. (strain ATCC 27144 / PCC 6301 / SAUG 1402/1) (Anacystis nidulans).